The following is a 393-amino-acid chain: MSDSTPKTPRGFVVHTAPVGLADDGRDDFTVLASTAPATVSAVFTRSRFAGPSVVLCREAVADGQARGVVVLARNANVATGLEGEENAREVREAVARALGLPEGEMLIASTGVIGRQYPMESIREHLKTLEWPAGEGGFDRAARAIMTTDTRPKEVRVSVGGATLVGIAKGVGMLEPDMATLLTFFATDARLDPAEQDRLFRRVMDRTFNAVSIDTDTSTSDTAVLFANGLAGEVDAGEFEEALHTAALALVKDIASDGEGAAKLIEVQVTGARDDAQAKRVGKTVVNSPLVKTAVHGCDPNWGRVAMAIGKCSDDTDIDQERVTIRFGEVEVYPPKARGDQADDALRAAVAEHLRGDEVVIGIDLAIADGAFTVYGCDLTEGYVRLNSEYTT.

Residues Thr-148, Lys-170, Thr-181, Glu-260, Asn-388, and Thr-393 each coordinate substrate. Thr-181 functions as the Nucleophile in the catalytic mechanism.

It belongs to the ArgJ family. Heterotetramer of two alpha and two beta chains.

The protein localises to the cytoplasm. It catalyses the reaction N(2)-acetyl-L-ornithine + L-glutamate = N-acetyl-L-glutamate + L-ornithine. The catalysed reaction is L-glutamate + acetyl-CoA = N-acetyl-L-glutamate + CoA + H(+). The protein operates within amino-acid biosynthesis; L-arginine biosynthesis; L-ornithine and N-acetyl-L-glutamate from L-glutamate and N(2)-acetyl-L-ornithine (cyclic): step 1/1. It functions in the pathway amino-acid biosynthesis; L-arginine biosynthesis; N(2)-acetyl-L-ornithine from L-glutamate: step 1/4. Its function is as follows. Catalyzes two activities which are involved in the cyclic version of arginine biosynthesis: the synthesis of N-acetylglutamate from glutamate and acetyl-CoA as the acetyl donor, and of ornithine by transacetylation between N(2)-acetylornithine and glutamate. The polypeptide is Arginine biosynthesis bifunctional protein ArgJ 3 (Streptomyces clavuligerus).